The primary structure comprises 1002 residues: MDTRDDVTLAKVPAPVAVYCGSVPRTSVGLRAPPPGGIDSSLLAHDEASLQPVSSVLPSSEKPSQLSREHEDQSSLMLNAPLKGWQARNGYPRGLGVLPLGHHLGAAIPSLESEASSVARDTIQIKDKLKKRRLSEGMAASSQASLDPVGGPRGVPLRSTIPRTTSQRLLRVPRPMPPIQSIPTTPEANSAKEKDLDPPGGRQDLQDPGASAQEVQISRQYLHCADEKMHKSLGGLVIPPIPKARMPTGTSSCRPGSLPSPLCPSQDVLMGPKAPHTRLTCENGPLEKTPKSPASKPLVPVVKAKSAEAPETSLASSQSTFTLTAFSSHAKETRSLENEEDQKESSTKVQVTISKSAQEKMRLKQMKEMELLRRAKEPEWERELVSQGLGTRRTSAKEGLLPLRGSGALSEPAGMSSPRRNNMGALQRKRANRASLPSIPVSKQEPGFARHASANSLPAVLTLGSPEWEEEEEEMDLRALRELRPFSNPELGLTDALQCLNSNDWQMKEKGLVNIQRLAACHSEVLGTRLHDVSLAVTAEVTNLRSKVSRLAISTLGDLFRVLKKNMDQEAEEIVRCLLQKMGNTSEFIQRAANRALGAMVENVTPARALVALTSAGVYHRNPLVRKCTAKHLSAVLEQIGAEKLLSGSRDNTDMLVHNLVRLAQDSNQDTRFYGRKMVNILMANAKFDAFLKQSLPSHDLRKVMAAIKQRGIQDNHELQSAKGRKVSKSLVVCENGLPSHEGVETSEQLRELTRLLEAKEFQARMEGVGKLLEYCKAKPELVAANLVQVFDVFTPRLHDSNKKVNQWALESLAQMLPILKESIHPMLLSLIIAAADNLNSKNSGISTAASTVLDAMMGSLDHLCLLQAFAGRVRFLTGPAVLDITDRLSVLVASVYPRKPQAVERHILPVLWYFLNKMSGNGVLPGRGGNVRTAVCRLARSLQEQMGSRLQDFAASQPQQVLKALQGLLASESLGANDKVIGGRMAPDIQMTGTTCPQQLD.

Disordered stretches follow at residues 54-74 (SSVLPSSEKPSQLSREHEDQS), 131-214 (KRRL…SAQE), 332-351 (ETRSLENEEDQKESSTKVQV), 402-421 (PLRGSGALSEPAGMSSPRRN), and 426-450 (LQRKRANRASLPSIPVSKQEPGFAR).

The protein belongs to the Crescerin family.

The protein is TOG array regulator of axonemal microtubules protein 2 (Togaram2) of Mus musculus (Mouse).